Here is a 575-residue protein sequence, read N- to C-terminus: Polyprotein P2A (575 aa).

The next 3 membrane-spanning stretches (helical) occupy residues 10–30 (FLIT…HTGG), 36–56 (LIPI…SASF), and 74–96 (VARV…VMMQ). The region spanning 135–335 (VLGSFYSSVK…TLPPELSVIE (201 aa)) is the Peptidase S39 domain. Residues His-181, Asp-216, and Ser-284 each act as for protease activity in the active site. Residues 513 to 575 (KTSLSATPPP…QPTKTSLRGI (63 aa)) are disordered. Positions 541 to 553 (KSARRRNRRKSTR) are enriched in basic residues. Residues 558 to 575 (ESPSPASPQPTKTSLRGI) are compositionally biased toward polar residues.

In terms of processing, the polyprotein is proteolytically cleaved into several chains by the viral protease.

It is found in the host membrane. In terms of biological role, responsible for cleavages of polyprotein P2A and replicase polyprotein P2AB. Its function is as follows. Covalently attached to the 5' extremity of the genomic and subgenomic RNAs. It may serve as a primer for the replicase. The sequence is that of Polyprotein P2A from Southern bean mosaic virus (isolate Bean/United States/Arkansas) (SBMV).